A 528-amino-acid polypeptide reads, in one-letter code: MGWPCRSIIPLLVWCFVTLQAATREQKQPHGFAEDRLFKHLFTGYNRWSRPVPNTSDVVIVKFGLSIAQLIDVDEKNQMMTTNVWLKQEWSDYKLRWNPEDFDNVTSIRVPSEMIWIPDIVLYNNADGEFAVTHMTKAHLFSNGKVKWVPPAIYKSSCSIDVTYFPFDQQNCKMKFGSWTYDKAKIDLENMEHHVDLKDYWESGEWAIINAIGRYNSKKYDCCTEIYPDITFYFVIRRLPLFYTINLIIPCLLISCLTVLVFYLPSDCGEKITLCISVLLSLTVFLLLITEIIPSTSLVIPLIGEYLLFTMIFVTLSIIITVFVLNVHHRSPSTHTMPHWVRSFFLGFIPRWLFMKRPPLLLPAEGTTGQYDPPGTRLSTSRCWLETDVDDKWEEEEEEEEEEEEEEEEEKAYPSRVPSGGSQGTQCHYSCERQAGKASGGPAPQVPLKGEEVGSDQGLTLSPSILRALEGVQYIADHLRAEDADFSVKEDWKYVAMVIDRIFLWMFIIVCLLGTVGLFLPPYLAGMI.

An N-terminal signal peptide occupies residues 1 to 23 (MGWPCRSIIPLLVWCFVTLQAAT). The Extracellular portion of the chain corresponds to 24–239 (REQKQPHGFA…ITFYFVIRRL (216 aa)). Asn-54 and Asn-104 each carry an N-linked (GlcNAc...) asparagine glycan. Intrachain disulfides connect Cys-158-Cys-172 and Cys-222-Cys-223. Transmembrane regions (helical) follow at residues 240 to 264 (PLFY…VFYL), 272 to 290 (ITLC…LLIT), and 306 to 327 (YLLF…VLNV). The Cytoplasmic segment spans residues 328 to 501 (HHRSPSTHTM…WKYVAMVIDR (174 aa)). Over residues 390 to 410 (DDKWEEEEEEEEEEEEEEEEE) the composition is skewed to acidic residues. The tract at residues 390-427 (DDKWEEEEEEEEEEEEEEEEEKAYPSRVPSGGSQGTQC) is disordered. A helical membrane pass occupies residues 502 to 520 (IFLWMFIIVCLLGTVGLFL).

This sequence belongs to the ligand-gated ion channel (TC 1.A.9) family. Acetylcholine receptor (TC 1.A.9.1) subfamily. Alpha-2/CHRNA2 sub-subfamily. As to quaternary structure, neuronal AChR is composed of two different types of subunits: alpha and non-alpha (beta). CHRNA2/alpha-2 subunit can be combined to CHRNB2/beta-2 or CHRNB4/beta-4 to give rise to functional receptors. Both CHRNA2:CHRNB2 and CHRNA2:CHRNB4 nAChR complexes are heteropentamers with two subtypes: LS (low agonist sensitivity) with a (CHRNA2)3:(CHRNB2/4)2 and HS (high agonist sensitivity) with a (CHRNA2)2:(CHRNB2/4)3 stoichiometries; the subtypes differ in their subunit binding interfaces which are involved in ligand binding.

Its subcellular location is the synaptic cell membrane. It is found in the cell membrane. It carries out the reaction Ca(2+)(in) = Ca(2+)(out). The enzyme catalyses K(+)(in) = K(+)(out). The catalysed reaction is Na(+)(in) = Na(+)(out). Its function is as follows. Component of neuronal acetylcholine receptors (nAChRs) that function as pentameric, ligand-gated cation channels with high calcium permeability among other activities. nAChRs are excitatory neurotrasnmitter receptors formed by a collection of nAChR subunits known to mediate synaptic transmission in the nervous system and the neuromuscular junction. Each nAchR subunit confers differential attributes to channel properties, including activation, deactivation and desensitization kinetics, pH sensitivity, cation permeability, and binding to allosteric modulators. CHRNA2 forms heteropentameric neuronal acetylcholine receptors with CHRNB2 and CHRNB4 and plays a role in nicotine dependence. The chain is Neuronal acetylcholine receptor subunit alpha-2 (CHRNA2) from Gallus gallus (Chicken).